The following is a 457-amino-acid chain: Putative methyltransferase MT1451 (457 aa).

S-adenosyl-L-methionine contacts are provided by residues 276 to 282 (CAGPGGK), glutamate 301, aspartate 325, and aspartate 341. Residue cysteine 394 is the Nucleophile of the active site.

This sequence belongs to the class I-like SAM-binding methyltransferase superfamily. RsmB/NOP family.

Functionally, may act as RNA methyltransferase. The chain is Putative methyltransferase MT1451 from Mycobacterium tuberculosis (strain CDC 1551 / Oshkosh).